The following is a 3127-amino-acid chain: Probable polyketide synthase 33 (3127 aa).

The 434-residue stretch at 24-457 (SGDVAVVGIG…GSNVCLILSE (434 aa)) folds into the Ketosynthase family 3 (KS3) domain. Active-site for beta-ketoacyl synthase activity residues include Cys-196, His-335, and His-380. Residues 660–693 (GVSADIIIGHSLGEISSAYCSGMIDFQTLCYLTY) are acyl/malonyl transferase. The active-site For acyl/malonyl transferase activity is Ser-670. The interval 958–1080 (GPSIHSLGNN…GNFSLFKHNI (123 aa)) is N-terminal hotdog fold. The region spanning 958–1257 (GPSIHSLGNN…CTIVGSNPDS (300 aa)) is the PKS/mFAS DH domain. The active-site Proton acceptor; for dehydratase activity is the His-992. The segment at 1096 to 1257 (NFTTISKQDF…CTIVGSNPDS (162 aa)) is C-terminal hotdog fold. The active-site Proton donor; for dehydratase activity is Asp-1168. A disordered region spans residues 1369-1394 (SNNNNNNNNNNNNNNNNNNNNKNNGY). The segment covering 1370 to 1394 (NNNNNNNNNNNNNNNNNNNNKNNGY) has biased composition (low complexity). Positions 2539 to 2616 (SNNEIIRSTI…QSIEIIKSAH (78 aa)) constitute a Carrier domain. The residue at position 2576 (Ser-2576) is an O-(pantetheine 4'-phosphoryl)serine. A disordered region spans residues 2617-2659 (NKNNNNNNINNNNNNNNNNNNNNNNNNNNNNNNNNNNNNNNNN). The stretch at 2617–2671 (NKNNNNNNINNNNNNNNNNNNNNNNNNNNNNNNNNNNNNNNNNLVKKEQQSLDEF) forms a coiled coil. Residues 2937–2957 (VLTLYNIPITIFIAILIIDIF) form a helical membrane-spanning segment.

The cofactor is pantetheine 4'-phosphate.

Its subcellular location is the membrane. Functionally, probable polyketide synthase. This is Probable polyketide synthase 33 (pks33) from Dictyostelium discoideum (Social amoeba).